We begin with the raw amino-acid sequence, 178 residues long: Twist-related protein (178 aa).

Positions 20 to 71 (QQRACANRRERQRTKELNDAFTLLRKLIPSMPSDKMSKIHTLRIATDYISFL) constitute a bHLH domain.

As to quaternary structure, efficient DNA binding requires dimerization with another bHLH protein. Homodimer. Forms a heterodimer with hlh-2. As to expression, expressed in defecation-associated muscles and neuron-like cells in the head at the L1 stage. In later larvae, expressed in SM cells and their descendants. Not expressed in differentiated body wall or sex muscles.

It localises to the nucleus. Acts as a transcriptional regulator. Involved in postembryonic mesodermal cell fate specification. Activates ceh-24 and egl-15 during mesodermal patterning. In Caenorhabditis elegans, this protein is Twist-related protein (hlh-8).